The chain runs to 366 residues: Chorismate synthase (366 aa).

R48 is a binding site for NADP(+). FMN is bound by residues 125-127, 241-242, G285, 300-304, and R326; these read RSS, NA, and KPTSS.

Belongs to the chorismate synthase family. Homotetramer. It depends on FMNH2 as a cofactor.

The catalysed reaction is 5-O-(1-carboxyvinyl)-3-phosphoshikimate = chorismate + phosphate. It participates in metabolic intermediate biosynthesis; chorismate biosynthesis; chorismate from D-erythrose 4-phosphate and phosphoenolpyruvate: step 7/7. In terms of biological role, catalyzes the anti-1,4-elimination of the C-3 phosphate and the C-6 proR hydrogen from 5-enolpyruvylshikimate-3-phosphate (EPSP) to yield chorismate, which is the branch point compound that serves as the starting substrate for the three terminal pathways of aromatic amino acid biosynthesis. This reaction introduces a second double bond into the aromatic ring system. This is Chorismate synthase from Ruegeria pomeroyi (strain ATCC 700808 / DSM 15171 / DSS-3) (Silicibacter pomeroyi).